Here is a 235-residue protein sequence, read N- to C-terminus: Geranylgeranylglyceryl phosphate synthase (235 aa).

A sn-glycerol 1-phosphate-binding site is contributed by K13. Positions 15 and 42 each coordinate Mg(2+). Residues 162–167, G192, and 212–213 each bind sn-glycerol 1-phosphate; these read YVEYSG and GD.

It belongs to the GGGP/HepGP synthase family. Group I subfamily. Requires Mg(2+) as cofactor.

The protein localises to the cytoplasm. The enzyme catalyses sn-glycerol 1-phosphate + (2E,6E,10E)-geranylgeranyl diphosphate = sn-3-O-(geranylgeranyl)glycerol 1-phosphate + diphosphate. The protein operates within membrane lipid metabolism; glycerophospholipid metabolism. Its function is as follows. Prenyltransferase that catalyzes the transfer of the geranylgeranyl moiety of geranylgeranyl diphosphate (GGPP) to the C3 hydroxyl of sn-glycerol-1-phosphate (G1P). This reaction is the first ether-bond-formation step in the biosynthesis of archaeal membrane lipids. The polypeptide is Geranylgeranylglyceryl phosphate synthase (Natronomonas pharaonis (strain ATCC 35678 / DSM 2160 / CIP 103997 / JCM 8858 / NBRC 14720 / NCIMB 2260 / Gabara) (Halobacterium pharaonis)).